The chain runs to 367 residues: tRNA 2-selenouridine synthase (367 aa).

The 125-residue stretch at 12–136 (FLNDRPLMDA…LRGFLIDTLE (125 aa)) folds into the Rhodanese domain. Cysteine 95 (S-selanylcysteine intermediate) is an active-site residue.

This sequence belongs to the SelU family. Monomer.

It catalyses the reaction 5-methylaminomethyl-2-thiouridine(34) in tRNA + selenophosphate + (2E)-geranyl diphosphate + H2O + H(+) = 5-methylaminomethyl-2-selenouridine(34) in tRNA + (2E)-thiogeraniol + phosphate + diphosphate. The enzyme catalyses 5-methylaminomethyl-2-thiouridine(34) in tRNA + (2E)-geranyl diphosphate = 5-methylaminomethyl-S-(2E)-geranyl-thiouridine(34) in tRNA + diphosphate. It carries out the reaction 5-methylaminomethyl-S-(2E)-geranyl-thiouridine(34) in tRNA + selenophosphate + H(+) = 5-methylaminomethyl-2-(Se-phospho)selenouridine(34) in tRNA + (2E)-thiogeraniol. The catalysed reaction is 5-methylaminomethyl-2-(Se-phospho)selenouridine(34) in tRNA + H2O = 5-methylaminomethyl-2-selenouridine(34) in tRNA + phosphate. Its function is as follows. Involved in the post-transcriptional modification of the uridine at the wobble position (U34) of tRNA(Lys), tRNA(Glu) and tRNA(Gln). Catalyzes the conversion of 2-thiouridine (S2U-RNA) to 2-selenouridine (Se2U-RNA). Acts in a two-step process involving geranylation of 2-thiouridine (S2U) to S-geranyl-2-thiouridine (geS2U) and subsequent selenation of the latter derivative to 2-selenouridine (Se2U) in the tRNA chain. The protein is tRNA 2-selenouridine synthase of Pseudomonas fluorescens (strain Pf0-1).